The primary structure comprises 387 residues: Protein-glutamate methylesterase/protein-glutamine glutaminase 1 (387 aa).

Residues 18 to 136 (RVMVVDDSAV…EISGGTDFRH (119 aa)) enclose the Response regulatory domain. Aspartate 69 bears the 4-aspartylphosphate mark. The 198-residue stretch at 190–387 (PAAEERPDII…AYVLRSANKR (198 aa)) folds into the CheB-type methylesterase domain. Catalysis depends on residues serine 204, histidine 233, and aspartate 329.

Belongs to the CheB family. Phosphorylated by CheA. Phosphorylation of the N-terminal regulatory domain activates the methylesterase activity.

It localises to the cytoplasm. The enzyme catalyses [protein]-L-glutamate 5-O-methyl ester + H2O = L-glutamyl-[protein] + methanol + H(+). It catalyses the reaction L-glutaminyl-[protein] + H2O = L-glutamyl-[protein] + NH4(+). Involved in chemotaxis. Part of a chemotaxis signal transduction system that modulates chemotaxis in response to various stimuli. Catalyzes the demethylation of specific methylglutamate residues introduced into the chemoreceptors (methyl-accepting chemotaxis proteins or MCP) by CheR. Also mediates the irreversible deamidation of specific glutamine residues to glutamic acid. The protein is Protein-glutamate methylesterase/protein-glutamine glutaminase 1 of Rhodospirillum rubrum (strain ATCC 11170 / ATH 1.1.1 / DSM 467 / LMG 4362 / NCIMB 8255 / S1).